The chain runs to 92 residues: Large ribosomal subunit protein eL42 (92 aa).

Zn(2+) is bound by residues C11, C14, C70, and C73. Residues 11–73 (CPNCRKHTVH…LDLRLKCKEC (63 aa)) form a C4-type zinc finger.

This sequence belongs to the eukaryotic ribosomal protein eL42 family. As to quaternary structure, part of the 50S ribosomal subunit. The cofactor is Zn(2+).

In terms of biological role, binds to the 23S rRNA. In Methanothermobacter thermautotrophicus (strain ATCC 29096 / DSM 1053 / JCM 10044 / NBRC 100330 / Delta H) (Methanobacterium thermoautotrophicum), this protein is Large ribosomal subunit protein eL42.